Reading from the N-terminus, the 117-residue chain is MSRDNQEIKAPEESSAEEQKEMDDKVTSPEKAEEIKLKSRYPNIGPKPGGSDFLRKRLQKGQKYFDSGDYNMAKAKMKNKQLPTAAPDKTEVTGDHIPTPQDLPQRKPSLVASKLAG.

Basic and acidic residues predominate over residues 1-37 (MSRDNQEIKAPEESSAEEQKEMDDKVTSPEKAEEIKL). The segment at 1-54 (MSRDNQEIKAPEESSAEEQKEMDDKVTSPEKAEEIKLKSRYPNIGPKPGGSDFL) is disordered. Serine 28 bears the Phosphoserine; by CDK2 mark. Serine 67 carries the phosphoserine; by GWL modification. A disordered region spans residues 77–117 (MKNKQLPTAAPDKTEVTGDHIPTPQDLPQRKPSLVASKLAG). Threonine 99 is modified (phosphothreonine; by CDK2). The residue at position 109 (serine 109) is a Phosphoserine; by PKA.

Belongs to the endosulfine family. In terms of assembly, interacts (when phosphorylated at Ser-67) with ppp2r2d. In terms of processing, phosphorylation at Ser-67 by gwl during mitosis is essential for interaction with ppp2r2d (PR55-delta) and subsequent inactivation of PP2A.

Its subcellular location is the cytoplasm. Its function is as follows. Protein phosphatase inhibitor that specifically inhibits protein phosphatase 2A (PP2A) during mitosis. When phosphorylated at Ser-67 during mitosis, specifically interacts with ppp2r2d (PR55-delta) and inhibits its activity, leading to inactivation of PP2A, an essential condition to keep cyclin-B1-CDK1 activity high during M phase. This is cAMP-regulated phosphoprotein 19-B (arpp19-b) from Xenopus laevis (African clawed frog).